A 299-amino-acid chain; its full sequence is Peroxisomal biogenesis factor 19 (299 aa).

Positions 1–63 (MAAAEGDGGV…SPGDTAKDAL (63 aa)) are disordered. The residue at position 2 (Ala2) is an N-acetylalanine. Residues 2–56 (AAAEGDGGVRAEADRELEELLESALDDFDKAKPSPAPPPTTTAPDASGPQKRSPG) are docking to the peroxisome membrane and binding to PEX3. Residues 2 to 91 (AAAEGDGGVR…QATAEFEKAM (90 aa)) form a necessary for PEX19 function on peroxisome biogenesis region. The segment covering 16-27 (RELEELLESALD) has biased composition (acidic residues). A phosphoserine mark is found at Ser35, Ser54, and Ser66. Residue Thr236 is modified to Phosphothreonine. A Cysteine methyl ester modification is found at Cys296. Residue Cys296 is the site of S-farnesyl cysteine attachment. Positions 297–299 (LIM) are cleaved as a propeptide — removed in mature form.

It belongs to the peroxin-19 family. As to quaternary structure, interacts with a broad range of peroxisomal membrane proteins, including PEX3, PEX10, PEX11A, PEX11B, PEX12, PEX13, PEX14 and PEX16, PXMP2/PMP22, PXMP4/PMP24, SLC25A17/PMP34, ABCD1/ALDP, ABCD2/ALDRP, and ABCD3/PMP70. Also interacts with the tumor suppressor CDKN2A/p19ARF.

It is found in the cytoplasm. The protein localises to the peroxisome membrane. In terms of biological role, necessary for early peroxisomal biogenesis. Acts both as a cytosolic chaperone and as an import receptor for peroxisomal membrane proteins (PMPs). Binds and stabilizes newly synthesized PMPs in the cytoplasm by interacting with their hydrophobic membrane-spanning domains, and targets them to the peroxisome membrane by binding to the integral membrane protein PEX3. Excludes CDKN2A from the nucleus and prevents its interaction with MDM2, which results in active degradation of TP53. The polypeptide is Peroxisomal biogenesis factor 19 (PEX19) (Bos taurus (Bovine)).